A 351-amino-acid chain; its full sequence is DNA polymerase IV (351 aa).

The region spanning 4 to 185 (IIHVDMDCFF…LPLEKIPGVG (182 aa)) is the UmuC domain. Mg(2+) contacts are provided by Asp8 and Asp103. Glu104 is a catalytic residue.

It belongs to the DNA polymerase type-Y family. As to quaternary structure, monomer. Mg(2+) is required as a cofactor.

It localises to the cytoplasm. It carries out the reaction DNA(n) + a 2'-deoxyribonucleoside 5'-triphosphate = DNA(n+1) + diphosphate. Functionally, poorly processive, error-prone DNA polymerase involved in untargeted mutagenesis. Copies undamaged DNA at stalled replication forks, which arise in vivo from mismatched or misaligned primer ends. These misaligned primers can be extended by PolIV. Exhibits no 3'-5' exonuclease (proofreading) activity. May be involved in translesional synthesis, in conjunction with the beta clamp from PolIII. The protein is DNA polymerase IV of Shigella flexneri.